Reading from the N-terminus, the 503-residue chain is Glycerol kinase (503 aa).

Thr-14 is a binding site for ADP. Thr-14, Thr-15, and Ser-16 together coordinate ATP. Thr-14 is a sn-glycerol 3-phosphate binding site. Residue Arg-18 participates in ADP binding. Sn-glycerol 3-phosphate is bound by residues Arg-84, Glu-85, Tyr-136, and Asp-246. Residues Arg-84, Glu-85, Tyr-136, Asp-246, and Gln-247 each coordinate glycerol. Residues Thr-268 and Gly-311 each contribute to the ADP site. Thr-268, Gly-311, Gln-315, and Gly-412 together coordinate ATP. 2 residues coordinate ADP: Gly-412 and Asn-416.

It belongs to the FGGY kinase family. Homotetramer and homodimer (in equilibrium). Heterodimer with EIIA-Glc. Binds 1 zinc ion per glycerol kinase EIIA-Glc dimer. The zinc ion is important for dimerization.

It carries out the reaction glycerol + ATP = sn-glycerol 3-phosphate + ADP + H(+). It functions in the pathway polyol metabolism; glycerol degradation via glycerol kinase pathway; sn-glycerol 3-phosphate from glycerol: step 1/1. Activity of this regulatory enzyme is affected by several metabolites. Allosterically and non-competitively inhibited by fructose 1,6-bisphosphate (FBP) and unphosphorylated phosphocarrier protein EIIA-Glc (III-Glc), an integral component of the bacterial phosphotransferase (PTS) system. Key enzyme in the regulation of glycerol uptake and metabolism. Catalyzes the phosphorylation of glycerol to yield sn-glycerol 3-phosphate. The sequence is that of Glycerol kinase from Klebsiella pneumoniae subsp. pneumoniae (strain ATCC 700721 / MGH 78578).